The sequence spans 131 residues: UPF0102 protein RPD_0400 (131 aa).

This sequence belongs to the UPF0102 family.

This is UPF0102 protein RPD_0400 from Rhodopseudomonas palustris (strain BisB5).